Consider the following 819-residue polypeptide: DNA topoisomerase 4 subunit A (819 aa).

Positions Leu30–Leu496 constitute a Topo IIA-type catalytic domain. Tyr118 acts as the O-(5'-phospho-DNA)-tyrosine intermediate in catalysis.

It belongs to the type II topoisomerase GyrA/ParC subunit family. ParC type 2 subfamily. In terms of assembly, heterotetramer composed of ParC and ParE.

Its subcellular location is the cell membrane. The enzyme catalyses ATP-dependent breakage, passage and rejoining of double-stranded DNA.. Its function is as follows. Topoisomerase IV is essential for chromosome segregation. It relaxes supercoiled DNA. Performs the decatenation events required during the replication of a circular DNA molecule. This is DNA topoisomerase 4 subunit A from Streptococcus pyogenes serotype M1.